The following is a 748-amino-acid chain: Bifunctional lysine-specific demethylase and histidyl-hydroxylase NO66 (748 aa).

Disordered regions lie at residues 65 to 135 (NIDR…RSTY) and 160 to 264 (TEVV…DDEG). A compositionally biased stretch (basic and acidic residues) spans 94–110 (LENKKPKVEVKKEDEKS). Over residues 124–134 (LVQNETSTRST) the composition is skewed to polar residues. A compositionally biased stretch (acidic residues) spans 163 to 193 (VESDDEQMIGLDSDEELEDEDETDIDEDEMM). A compositionally biased stretch (basic and acidic residues) spans 194 to 203 (IDPKDIERYI). A compositionally biased stretch (acidic residues) spans 207–264 (SVEDEEDMEDEEIEDEEFEDEEFEDEEEEADEQEEEEEDVSDEESVVSEMDADSDDEG). Residues 399 to 543 (QLVNPQTYDD…NLMEKVVPEA (145 aa)) enclose the JmjC domain. 3 residues coordinate Fe cation: H442, D444, and H509.

Belongs to the ROX family. NO66 subfamily. Fe(2+) is required as a cofactor.

The protein localises to the nucleus. The catalysed reaction is N(6),N(6)-dimethyl-L-lysyl(36)-[histone H3] + 2 2-oxoglutarate + 2 O2 = L-lysyl(36)-[histone H3] + 2 formaldehyde + 2 succinate + 2 CO2. Oxygenase that can act as both a histone lysine demethylase and a ribosomal histidine hydroxylase. Specifically demethylates 'Lys-4' (H3K4me) and 'Lys-36' (H3K36me) of histone H3, thereby playing a central role in histone code. Mediates response to multiple stress stimuli, including heat shock and osmotic, oxidative, and ethanol stress. The chain is Bifunctional lysine-specific demethylase and histidyl-hydroxylase NO66 (jmjc-1) from Caenorhabditis elegans.